Reading from the N-terminus, the 120-residue chain is Transmembrane protein 010R (120 aa).

Helical transmembrane passes span 40 to 60 (FCGA…ATAT) and 72 to 92 (SIFF…VWFL).

It belongs to the IIV-6 010R family.

The protein localises to the membrane. The protein is Transmembrane protein 010R of Invertebrate iridescent virus 6 (IIV-6).